Consider the following 223-residue polypeptide: Cutinase 4 (223 aa).

The N-terminal stretch at 1–26 (MPLPLLPPLLLPLEALLDLALHLVDS) is a signal peptide. C60 and C133 are disulfide-bonded. Catalysis depends on S144, which acts as the Nucleophile. C187 and C194 form a disulfide bridge. D191 is a catalytic residue. The active-site Proton donor/acceptor is H203.

The protein belongs to the cutinase family. The 2 disulfide bonds play a critical role in holding the catalytic residues in juxta-position; reduction of the disulfide bridges results in the complete inactivation of the enzyme.

It is found in the secreted. The enzyme catalyses cutin + H2O = cutin monomers.. Functionally, catalyzes the hydrolysis of complex carboxylic polyesters found in the cell wall of plants. Degrades cutin, a macromolecule that forms the structure of the plant cuticle. Also degrades suberin, a specialized macromolecule found in the cell wall of various plant tissues. This is Cutinase 4 from Emericella nidulans (strain FGSC A4 / ATCC 38163 / CBS 112.46 / NRRL 194 / M139) (Aspergillus nidulans).